The sequence spans 1012 residues: Vacuolar membrane protease (1012 aa).

Over 1-60 (MRRSTDPRNLLVRRGPLLVDGESAISELDPGFFPTGDAPKMSSTTRRRFNLIAFTPGPVT) the chain is Cytoplasmic. A helical transmembrane segment spans residues 61 to 81 (VISSLVYLALLIPLLLVHTIV). Residues 82 to 432 (PSAPKSNPKG…SFAVFRLHTL (351 aa)) are Vacuolar-facing. Asn-159 is a glycosylation site (N-linked (GlcNAc...) asparagine). The Zn(2+) site is built by His-215 and Asp-227. The Proton acceptor role is filled by Glu-261. 3 residues coordinate Zn(2+): Glu-262, Glu-287, and His-360. Residues 433 to 453 (FAISVTLLVVCPIVLFVIGII) traverse the membrane as a helical segment. Topologically, residues 454-487 (LSKMDKMYLFSIHETIPETKEKVSVRGLRGLFRY) are cytoplasmic. A helical membrane pass occupies residues 488 to 508 (PIILVVSSGILIGLSYLLAKV). Over 509 to 518 (NPFIVHSSSY) the chain is Vacuolar. The chain crosses the membrane as a helical span at residues 519-539 (AVWSMMLSSWIFMTWFLSCIA). At 540 to 550 (DFFRPSALHRA) the chain is on the cytoplasmic side. Residues 551–571 (YTFTWQLLVMWVLLVISTVYV) form a helical membrane-spanning segment. At 572–575 (NQHD) the chain is on the vacuolar side. A helical membrane pass occupies residues 576–596 (IAAGYFIVFYFAGTFLATLIS). Residues 597-710 (YLELFALPNK…WSASLPTWTW (114 aa)) are Cytoplasmic-facing. Residues 614–629 (SQYPSRLGSNRSSRIL) are compositionally biased toward polar residues. The interval 614–660 (SQYPSRLGSNRSSRILSPSADELPTGGDNNGEIYDGEEEPTESSSLL) is disordered. Residues 711–731 (VLQFLFVGPVVIMFIGQLGLF) form a helical membrane-spanning segment. The Vacuolar segment spans residues 732–743 (LTSAMNQVGADG). The helical transmembrane segment at 744–764 (VGLLVVYIAIAVFSVLLLIPL) threads the bilayer. At 765–777 (SPFIHRFTYHVPT) the chain is on the cytoplasmic side. A helical transmembrane segment spans residues 778–798 (FLLLVFIATLIYNLAAFPFSA). The Vacuolar portion of the chain corresponds to 799-1012 (ENRLKIFFVQ…DGLVEVSRGF (214 aa)). Residues Asn-842 and Asn-878 are each glycosylated (N-linked (GlcNAc...) asparagine).

Belongs to the peptidase M28 family. It depends on Zn(2+) as a cofactor.

The protein localises to the vacuole membrane. Its function is as follows. May be involved in vacuolar sorting and osmoregulation. The chain is Vacuolar membrane protease from Coccidioides posadasii (strain C735) (Valley fever fungus).